A 433-amino-acid polypeptide reads, in one-letter code: C4-dicarboxylate transport protein (433 aa).

8 consecutive transmembrane segments (helical) span residues 8–28 (ILYV…HFWP), 44–64 (LIKM…IAGM), 78–98 (LLYF…AAHL), 148–168 (GDIL…AVLG), 188–208 (IVHV…AFTI), 222–242 (LIGT…GTIA), 307–327 (IYMT…LTLM), and 355–375 (AATL…ILGI).

Belongs to the dicarboxylate/amino acid:cation symporter (DAACS) (TC 2.A.23) family.

It is found in the cell inner membrane. Functionally, responsible for the transport of dicarboxylates such as succinate, fumarate, and malate from the periplasm across the membrane. The chain is C4-dicarboxylate transport protein from Cupriavidus taiwanensis (strain DSM 17343 / BCRC 17206 / CCUG 44338 / CIP 107171 / LMG 19424 / R1) (Ralstonia taiwanensis (strain LMG 19424)).